A 315-amino-acid polypeptide reads, in one-letter code: Methionyl-tRNA formyltransferase (315 aa).

109 to 112 is a binding site for (6S)-5,6,7,8-tetrahydrofolate; sequence SLLP.

The protein belongs to the Fmt family.

It carries out the reaction L-methionyl-tRNA(fMet) + (6R)-10-formyltetrahydrofolate = N-formyl-L-methionyl-tRNA(fMet) + (6S)-5,6,7,8-tetrahydrofolate + H(+). Attaches a formyl group to the free amino group of methionyl-tRNA(fMet). The formyl group appears to play a dual role in the initiator identity of N-formylmethionyl-tRNA by promoting its recognition by IF2 and preventing the misappropriation of this tRNA by the elongation apparatus. The sequence is that of Methionyl-tRNA formyltransferase from Lachnospira eligens (strain ATCC 27750 / DSM 3376 / VPI C15-48 / C15-B4) (Eubacterium eligens).